The following is a 187-amino-acid chain: Crossover junction endodeoxyribonuclease RuvC (187 aa).

Catalysis depends on residues Asp7, Glu67, and Asp140. Mg(2+) contacts are provided by Asp7, Glu67, and Asp140.

The protein belongs to the RuvC family. In terms of assembly, homodimer which binds Holliday junction (HJ) DNA. The HJ becomes 2-fold symmetrical on binding to RuvC with unstacked arms; it has a different conformation from HJ DNA in complex with RuvA. In the full resolvosome a probable DNA-RuvA(4)-RuvB(12)-RuvC(2) complex forms which resolves the HJ. The cofactor is Mg(2+).

It localises to the cytoplasm. It catalyses the reaction Endonucleolytic cleavage at a junction such as a reciprocal single-stranded crossover between two homologous DNA duplexes (Holliday junction).. Its function is as follows. The RuvA-RuvB-RuvC complex processes Holliday junction (HJ) DNA during genetic recombination and DNA repair. Endonuclease that resolves HJ intermediates. Cleaves cruciform DNA by making single-stranded nicks across the HJ at symmetrical positions within the homologous arms, yielding a 5'-phosphate and a 3'-hydroxyl group; requires a central core of homology in the junction. The consensus cleavage sequence is 5'-(A/T)TT(C/G)-3'. Cleavage occurs on the 3'-side of the TT dinucleotide at the point of strand exchange. HJ branch migration catalyzed by RuvA-RuvB allows RuvC to scan DNA until it finds its consensus sequence, where it cleaves and resolves the cruciform DNA. This Prosthecochloris aestuarii (strain DSM 271 / SK 413) protein is Crossover junction endodeoxyribonuclease RuvC.